Consider the following 374-residue polypeptide: RNA ligase 1 (374 aa).

3 residues coordinate ATP: Y37, R54, and K75. The active-site N6-AMP-lysine intermediate is K99. The ATP site is built by E159, K240, and K242. D272 contributes to the Mg(2+) binding site.

It belongs to the Tequatrovirus RNA ligase 1 family. The cofactor is Mg(2+).

It catalyses the reaction ATP + (ribonucleotide)n-3'-hydroxyl + 5'-phospho-(ribonucleotide)m = (ribonucleotide)n+m + AMP + diphosphate.. Involved in countering a host defense mechanism which, following viral infection, activates the host anticodon nuclease and shuts off viral translation. Repairs 5'-PO4 and 3'-OH groups in the cleaved host tRNA. The nick ligation reaction entails three nucleotidyl transfer steps. In the first step, the RNA ligase reacts with ATP in the absence of nucleic acid to form a covalent ligase-AMP intermediate and release pyrophosphate. In step 2, the ligase-AMP binds to the nicked duplex nucleic acid and transfers the adenylate to the 5'-PO4 terminus to form an adenylylated nicked intermediate. In step 3, the RNA ligase directs the attack of the nick 3'-OH on the 5'-phosphoanhydride linkage, resulting in a repaired 3'-5' phosphodiester and release of AMP. This is RNA ligase 1 (63) from Enterobacteria phage T4 (Bacteriophage T4).